A 498-amino-acid chain; its full sequence is Germ cell-less protein-like 2 (498 aa).

Positions 33–39 (SRKRKRN) match the Nuclear localization signal motif. A BTB domain is found at 90–160 (SDIKIRALGR…LYTDADLSIT (71 aa)).

In terms of assembly, interacts with CUL3.

The protein resides in the nucleus matrix. The protein operates within protein modification; protein ubiquitination. Functionally, possible function in spermatogenesis. Probable substrate-specific adapter of an E3 ubiquitin-protein ligase complex which mediates the ubiquitination and subsequent proteasomal degradation of target proteins. In Mus musculus (Mouse), this protein is Germ cell-less protein-like 2 (Gmcl2).